A 359-amino-acid chain; its full sequence is Acyl-CoA desaturase 3 (359 aa).

The segment at 1–34 (MPGHLLQEEMTPSYTTTTTITAPPSGSLQNGREK) is disordered. Residues 1–72 (MPGHLLQEEM…EGPPPKLEYV (72 aa)) lie on the Cytoplasmic side of the membrane. Over residues 11–27 (TPSYTTTTTITAPPSGS) the composition is skewed to low complexity. The chain crosses the membrane as a helical span at residues 73–93 (WRNIILMALLHVGALYGITLV). Asn-75 provides a ligand contact to substrate. Residues 94–97 (PSCK) are Lumenal-facing. The chain crosses the membrane as a helical span at residues 98 to 118 (LYTCLFAFVYYVISIEGIGAG). Residues 119–217 (VHRLWSHRTY…EKLVMFQRRY (99 aa)) lie on the Cytoplasmic side of the membrane. 2 residues coordinate Fe cation: His-120 and His-125. Residues 120–125 (HRLWSH) carry the Histidine box-1 motif. Substrate contacts are provided by Asn-148, Arg-155, and Asp-156. Residues His-157, His-160, and His-161 each coordinate Fe cation. The short motif at 157–161 (HRAHH) is the Histidine box-2 element. Substrate-binding residues include Arg-188 and Lys-189. Phosphoserine is present on Ser-203. Residues 218–237 (YKPGILLMCFILPTLVPWYC) form a helical membrane-spanning segment. Residues 238 to 241 (WGET) are Lumenal-facing. The chain crosses the membrane as a helical span at residues 242–263 (FLNSFYVATLLRYAVVLNATWL). Residue Trp-262 coordinates substrate. The Cytoplasmic segment spans residues 264 to 359 (VNSAAHLYGY…RTGDGSHKSG (96 aa)). Residues His-269, His-298, His-301, and His-302 each contribute to the Fe cation site. The short motif at 298-302 (HNYHH) is the Histidine box-3 element.

Belongs to the fatty acid desaturase type 1 family. The cofactor is Fe(2+). As to expression, detected in skin, but at lower levels compared to Scd1. Detected in the middlle part of the sebaceous gland, but not in hair follicle. Not detected in liver and brain.

The protein localises to the endoplasmic reticulum membrane. The protein resides in the microsome membrane. The enzyme catalyses hexadecanoyl-CoA + 2 Fe(II)-[cytochrome b5] + O2 + 2 H(+) = (9Z)-hexadecenoyl-CoA + 2 Fe(III)-[cytochrome b5] + 2 H2O. Its function is as follows. Stearoyl-CoA desaturase that utilizes O(2) and electrons from reduced cytochrome b5 to introduce the first double bond into saturated fatty acyl-CoA substrates. Catalyzes the insertion of a cis double bond at the delta-9 position into fatty acyl-CoA substrates including palmitoyl-CoA. Has a strong preference for saturated fatty acids with chain lengths of 14 or 16 carbon atoms (C14:0 and C16:0), and has only very low activity with stearatate (C18:0). Required for the biosynthesis of membrane phospholipids, cholesterol esters and triglycerides. The sequence is that of Acyl-CoA desaturase 3 from Mus musculus (Mouse).